The chain runs to 188 residues: Ribosome maturation factor RimM (188 aa).

The region spanning 103–177 is the PRC barrel domain; the sequence is EEGWYYADLI…RVVIDPPAGT (75 aa).

This sequence belongs to the RimM family. In terms of assembly, binds ribosomal protein uS19.

The protein resides in the cytoplasm. An accessory protein needed during the final step in the assembly of 30S ribosomal subunit, possibly for assembly of the head region. Essential for efficient processing of 16S rRNA. May be needed both before and after RbfA during the maturation of 16S rRNA. It has affinity for free ribosomal 30S subunits but not for 70S ribosomes. This chain is Ribosome maturation factor RimM, found in Parvibaculum lavamentivorans (strain DS-1 / DSM 13023 / NCIMB 13966).